The primary structure comprises 210 residues: Large ribosomal subunit protein uL3 (210 aa).

Positions 125-154 are disordered; the sequence is RHGFRGGPKTHGQSDRHRAPGSIGAGTTPG.

Belongs to the universal ribosomal protein uL3 family. In terms of assembly, part of the 50S ribosomal subunit. Forms a cluster with proteins L14 and L19.

Functionally, one of the primary rRNA binding proteins, it binds directly near the 3'-end of the 23S rRNA, where it nucleates assembly of the 50S subunit. The polypeptide is Large ribosomal subunit protein uL3 (Chloroflexus aggregans (strain MD-66 / DSM 9485)).